We begin with the raw amino-acid sequence, 213 residues long: MPVHEIRHPLIRHKLGIMRRADLSTKSFRELSQEVAALLTYEATKDMPLAPASVEGWCGTVEVDKIAGKKVTVVPILRAGIGMLDGVLSLIPGAKVSVVGVARNEETLQAHTYLERLVGELDQRLALIVDPMLATGGSMVAAIDMLKRAGCREIRALTLVSAPEGIDAVLTAHPDVQIYTASIDQGLNENGYIMPGLGDAGDRIFGTTQKHAE.

5-phospho-alpha-D-ribose 1-diphosphate contacts are provided by residues Arg78, Arg103, and 130-138 (DPMLATGGS). Uracil-binding positions include Ile193 and 198 to 200 (GDA). Asp199 lines the 5-phospho-alpha-D-ribose 1-diphosphate pocket.

The protein belongs to the UPRTase family. Mg(2+) is required as a cofactor.

The catalysed reaction is UMP + diphosphate = 5-phospho-alpha-D-ribose 1-diphosphate + uracil. It participates in pyrimidine metabolism; UMP biosynthesis via salvage pathway; UMP from uracil: step 1/1. Its activity is regulated as follows. Allosterically activated by GTP. Catalyzes the conversion of uracil and 5-phospho-alpha-D-ribose 1-diphosphate (PRPP) to UMP and diphosphate. This Bordetella bronchiseptica (strain ATCC BAA-588 / NCTC 13252 / RB50) (Alcaligenes bronchisepticus) protein is Uracil phosphoribosyltransferase.